Consider the following 157-residue polypeptide: Transcriptional repressor NrdR (157 aa).

A zinc finger spans residues 3–34 (CPFCRHPDSRVVDSRTSDDGLSIRRRRQCPEC). The region spanning 46–136 (LSVIKRNGVV…VYQGFDSLDD (91 aa)) is the ATP-cone domain.

The protein belongs to the NrdR family. Zn(2+) serves as cofactor.

Functionally, negatively regulates transcription of bacterial ribonucleotide reductase nrd genes and operons by binding to NrdR-boxes. In Clavibacter sepedonicus (Clavibacter michiganensis subsp. sepedonicus), this protein is Transcriptional repressor NrdR.